Consider the following 423-residue polypeptide: Putative competence-damage inducible protein (423 aa).

Belongs to the CinA family.

This is Putative competence-damage inducible protein from Streptococcus uberis (strain ATCC BAA-854 / 0140J).